Reading from the N-terminus, the 680-residue chain is E3 ubiquitin-protein ligase brl2 (680 aa).

A coiled-coil region spans residues 44-72; that stretch reads RSIQFDELESKIEGLQNLAEEKLKVLATL. Residues 206 to 233 are disordered; the sequence is PQSTKVKEEATTSSKGKDEEKKVSTVEQ. Over residues 210 to 229 the composition is skewed to basic and acidic residues; that stretch reads KVKEEATTSSKGKDEEKKVS. Coiled coils occupy residues 261-288, 353-399, and 485-609; these read LDSN…TNLK, MQND…ETMV, and DSLH…LKDT. An RING-type zinc finger spans residues 627–667; sequence CSVCNFERWKDRIISLCGHGFCYQCIQKRIETRQRRCPICG.

It belongs to the BRE1 family. In terms of assembly, component of the histone H2B ubiquitin ligase complex (HULC) composed of at least brl1, brl2, rhp6 and shf1.

The protein localises to the nucleus. It catalyses the reaction S-ubiquitinyl-[E2 ubiquitin-conjugating enzyme]-L-cysteine + [acceptor protein]-L-lysine = [E2 ubiquitin-conjugating enzyme]-L-cysteine + N(6)-ubiquitinyl-[acceptor protein]-L-lysine.. It participates in protein modification; protein ubiquitination. Its function is as follows. E3 ubiquitin-protein ligase which belongs to the histone H2B ubiquitin ligase complex (HULC) which mediates monoubiquitination of histone H2B to form H2BK123ub1. H2BK123ub1 gives a specific tag for epigenetic transcriptional activation and is also a prerequisite for H3K4me and H3K79me formation. The polypeptide is E3 ubiquitin-protein ligase brl2 (brl2) (Schizosaccharomyces pombe (strain 972 / ATCC 24843) (Fission yeast)).